The sequence spans 292 residues: Inositol oxygenase (292 aa).

Substrate-binding positions include Arg33 and 88–90 (DES). His101, His128, and Asp129 together coordinate Fe cation. Residues Lys132 and 149–150 (GD) contribute to the substrate site. Fe cation contacts are provided by His201, His227, and Asp260. 227 to 228 (HS) is a binding site for substrate.

The protein belongs to the myo-inositol oxygenase family. The cofactor is Fe cation.

Its subcellular location is the cytoplasm. The enzyme catalyses myo-inositol + O2 = D-glucuronate + H2O + H(+). Its pathway is polyol metabolism; myo-inositol degradation into D-glucuronate; D-glucuronate from myo-inositol: step 1/1. The chain is Inositol oxygenase (miox) from Dictyostelium discoideum (Social amoeba).